A 359-amino-acid chain; its full sequence is Phosphoribosylformylglycinamidine cyclo-ligase (359 aa).

The protein belongs to the AIR synthase family.

Its subcellular location is the cytoplasm. It carries out the reaction 2-formamido-N(1)-(5-O-phospho-beta-D-ribosyl)acetamidine + ATP = 5-amino-1-(5-phospho-beta-D-ribosyl)imidazole + ADP + phosphate + H(+). The protein operates within purine metabolism; IMP biosynthesis via de novo pathway; 5-amino-1-(5-phospho-D-ribosyl)imidazole from N(2)-formyl-N(1)-(5-phospho-D-ribosyl)glycinamide: step 2/2. This is Phosphoribosylformylglycinamidine cyclo-ligase from Brucella melitensis biotype 2 (strain ATCC 23457).